A 287-amino-acid chain; its full sequence is Membrane protein insertase YidC 2 (287 aa).

Residues 1-26 (MKKKKRFKQKLLIASLVIGLVAVLSG) form the signal peptide. The N-palmitoyl cysteine moiety is linked to residue cysteine 27. Cysteine 27 is lipidated: S-diacylglycerol cysteine. Helical transmembrane passes span 65–85 (YAVGIIVVTILIRLLIMPLMI), 135–155 (MMGCLPLLIQMPILLGFYQAI), 178–198 (YILPIVAALTTFLSSKISMMG), 207–224 (AMIVYIMPVMILFMGITL), and 228–250 (LALYWIIGNIFTVFQTLLINNPF).

It belongs to the OXA1/ALB3/YidC family. Type 2 subfamily.

The protein resides in the cell membrane. In terms of biological role, required for the insertion and/or proper folding and/or complex formation of integral membrane proteins into the membrane. Involved in integration of membrane proteins that insert both dependently and independently of the Sec translocase complex, as well as at least some lipoproteins. The protein is Membrane protein insertase YidC 2 of Listeria innocua serovar 6a (strain ATCC BAA-680 / CLIP 11262).